Here is a 246-residue protein sequence, read N- to C-terminus: Proteasome subunit alpha (246 aa).

Belongs to the peptidase T1A family. The 20S proteasome core is composed of 14 alpha and 14 beta subunits that assemble into four stacked heptameric rings, resulting in a barrel-shaped structure. The two inner rings, each composed of seven catalytic beta subunits, are sandwiched by two outer rings, each composed of seven alpha subunits. The catalytic chamber with the active sites is on the inside of the barrel. Has a gated structure, the ends of the cylinder being occluded by the N-termini of the alpha-subunits. Is capped by the proteasome-associated ATPase, ARC. Can also interact with the bacterial proteasome activator Bpa through the C-terminal hydrophobic-tyrosine-X motif (HbYX motif) of Bpa; Bpa forms a homooligomeric ring-like structure which stacks co-axially with the proteasomal alpha-rings. In terms of processing, pupylated at an undetermined lysine residue by the prokaryotic ubiquitin-like protein Pup with the help of the ligase PafA, which leads to its degradation by the proteasome and thereby constitutes a negative auto-regulation.

Its subcellular location is the cytoplasm. Its pathway is protein degradation; proteasomal Pup-dependent pathway. With respect to regulation, the formation of the proteasomal ATPase ARC-20S proteasome complex, likely via the docking of the C-termini of ARC into the intersubunit pockets in the alpha-rings, may trigger opening of the gate for substrate entry. Interconversion between the open-gate and close-gate conformations leads to a dynamic regulation of the 20S proteasome proteolysis activity. PPS auto-regulates its own activity via pupylation and degradation of its components. Peptidolytic activity is inhibited by N-acetyl-Leu-Leu-norleucinal (Ac-LLnL) in vitro. In terms of biological role, component of the proteasome core, a large protease complex with broad specificity involved in protein degradation. The M.smegmatis proteasome is able to cleave oligopeptides after hydrophobic residues, thus displaying chymotrypsin-like activity. In complex with the ATPase Mpa, degrades protein targets conjugated to a prokaryotic ubiquitin-like protein (Pup). Identified substrates of the M.smegmatis proteasome are the pupylated SodA and Ino1 proteins. The Pup-proteasome system (PPS) is essential for survival under starvation; PPS likely functions to recycle amino acids under nitrogen starvation, thereby enabling the cell to maintain basal metabolic activities. The chain is Proteasome subunit alpha from Mycolicibacterium smegmatis (strain ATCC 700084 / mc(2)155) (Mycobacterium smegmatis).